Here is a 220-residue protein sequence, read N- to C-terminus: Ribosomal RNA large subunit methyltransferase E (220 aa).

Positions 60, 62, 92, 108, and 133 each coordinate S-adenosyl-L-methionine. Residue Lys-173 is the Proton acceptor of the active site. Residues 197–220 (RKPKASRDKSSETFILGRQLKQPR) form a disordered region.

It belongs to the class I-like SAM-binding methyltransferase superfamily. RNA methyltransferase RlmE family.

Its subcellular location is the cytoplasm. The enzyme catalyses uridine(2552) in 23S rRNA + S-adenosyl-L-methionine = 2'-O-methyluridine(2552) in 23S rRNA + S-adenosyl-L-homocysteine + H(+). Its function is as follows. Specifically methylates the uridine in position 2552 of 23S rRNA at the 2'-O position of the ribose in the fully assembled 50S ribosomal subunit. This is Ribosomal RNA large subunit methyltransferase E from Burkholderia ambifaria (strain ATCC BAA-244 / DSM 16087 / CCUG 44356 / LMG 19182 / AMMD) (Burkholderia cepacia (strain AMMD)).